The chain runs to 254 residues: MWLRCPHCHQLLFAKQLTQYAVCPNCDYGLRIPARHRLSWLVDSFKEFDKDLQTKNPLHFPGYQEKISKLQRQTKLNDSVLTGEASINDQLFSLGIMDPTFIMGSLGTVTGEKITRLFEYATTHRQAVVLFTASGGARMQEGIMSLMQMAKVSQAINEHAAAGLLYIVVLTDPTTGGVTASFAMDGDIILAEPHALVGFAGRRVIEQTIHQQIPIDLQSAENILHHGFIDRIVKRQDEKKLLEWLLKTGSVANE.

Residues 1–254 (MWLRCPHCHQ…LLKTGSVANE (254 aa)) form the CoA carboxyltransferase N-terminal domain. 4 residues coordinate Zn(2+): C5, C8, C23, and C26. A C4-type zinc finger spans residues 5 to 26 (CPHCHQLLFAKQLTQYAVCPNC).

The protein belongs to the AccD/PCCB family. In terms of assembly, acetyl-CoA carboxylase is a heterohexamer composed of biotin carboxyl carrier protein (AccB), biotin carboxylase (AccC) and two subunits each of ACCase subunit alpha (AccA) and ACCase subunit beta (AccD). The cofactor is Zn(2+).

It localises to the cytoplasm. It carries out the reaction N(6)-carboxybiotinyl-L-lysyl-[protein] + acetyl-CoA = N(6)-biotinyl-L-lysyl-[protein] + malonyl-CoA. It participates in lipid metabolism; malonyl-CoA biosynthesis; malonyl-CoA from acetyl-CoA: step 1/1. In terms of biological role, component of the acetyl coenzyme A carboxylase (ACC) complex. Biotin carboxylase (BC) catalyzes the carboxylation of biotin on its carrier protein (BCCP) and then the CO(2) group is transferred by the transcarboxylase to acetyl-CoA to form malonyl-CoA. This is Acetyl-coenzyme A carboxylase carboxyl transferase subunit beta from Limosilactobacillus reuteri (strain DSM 20016) (Lactobacillus reuteri).